Consider the following 376-residue polypeptide: Lipid-A-disaccharide synthase (376 aa).

It belongs to the LpxB family.

The enzyme catalyses a lipid X + a UDP-2-N,3-O-bis[(3R)-3-hydroxyacyl]-alpha-D-glucosamine = a lipid A disaccharide + UDP + H(+). It functions in the pathway bacterial outer membrane biogenesis; LPS lipid A biosynthesis. Functionally, condensation of UDP-2,3-diacylglucosamine and 2,3-diacylglucosamine-1-phosphate to form lipid A disaccharide, a precursor of lipid A, a phosphorylated glycolipid that anchors the lipopolysaccharide to the outer membrane of the cell. The polypeptide is Lipid-A-disaccharide synthase (Coxiella burnetii (strain RSA 331 / Henzerling II)).